Consider the following 239-residue polypeptide: uncharacterized protein (239 aa).

Residues 104-127 are disordered; the sequence is LPATSQSSQPKSTNSSTESSSIGQ. Residues 107-127 are compositionally biased toward low complexity; it reads TSQSSQPKSTNSSTESSSIGQ. Residues 134–202 are a coiled coil; the sequence is ENEINLNKNK…HFIQNNQESF (69 aa). Residues 211–231 form a helical membrane-spanning segment; the sequence is VKIGSAFIIYIFYNVLFFIIV.

The protein localises to the membrane. This is an uncharacterized protein from Dictyostelium discoideum (Social amoeba).